The following is a 401-amino-acid chain: Argininosuccinate synthase (401 aa).

ATP-binding positions include 7-15 and alanine 34; that span reads AYSGGLDTS. L-citrulline contacts are provided by tyrosine 85 and serine 90. Glycine 115 contacts ATP. L-aspartate is bound by residues threonine 117, asparagine 121, and aspartate 122. L-citrulline is bound at residue asparagine 121. L-citrulline-binding residues include arginine 125, serine 174, serine 183, glutamate 259, and tyrosine 271.

This sequence belongs to the argininosuccinate synthase family. Type 1 subfamily. In terms of assembly, homotetramer.

Its subcellular location is the cytoplasm. It carries out the reaction L-citrulline + L-aspartate + ATP = 2-(N(omega)-L-arginino)succinate + AMP + diphosphate + H(+). It functions in the pathway amino-acid biosynthesis; L-arginine biosynthesis; L-arginine from L-ornithine and carbamoyl phosphate: step 2/3. The chain is Argininosuccinate synthase from Desulforamulus reducens (strain ATCC BAA-1160 / DSM 100696 / MI-1) (Desulfotomaculum reducens).